The sequence spans 426 residues: Dihydroorotase (426 aa).

Residues His58 and His60 each coordinate Zn(2+). Substrate is bound by residues 60 to 62 and Asn92; that span reads HLR. Zn(2+) contacts are provided by Asp150, His177, and His230. Asn276 serves as a coordination point for substrate. Asp303 is a binding site for Zn(2+). Asp303 is an active-site residue. Substrate is bound by residues His307 and 321–322; that span reads FG.

This sequence belongs to the metallo-dependent hydrolases superfamily. DHOase family. Class I DHOase subfamily. Requires Zn(2+) as cofactor.

It catalyses the reaction (S)-dihydroorotate + H2O = N-carbamoyl-L-aspartate + H(+). Its pathway is pyrimidine metabolism; UMP biosynthesis via de novo pathway; (S)-dihydroorotate from bicarbonate: step 3/3. Catalyzes the reversible cyclization of carbamoyl aspartate to dihydroorotate. This chain is Dihydroorotase, found in Listeria monocytogenes serotype 4b (strain F2365).